The following is a 515-amino-acid chain: Bifunctional purine biosynthesis protein PurH (515 aa).

The 145-residue stretch at 1–145 (MTKRVLISVS…KNHASVTVVV (145 aa)) folds into the MGS-like domain.

It belongs to the PurH family.

It catalyses the reaction (6R)-10-formyltetrahydrofolate + 5-amino-1-(5-phospho-beta-D-ribosyl)imidazole-4-carboxamide = 5-formamido-1-(5-phospho-D-ribosyl)imidazole-4-carboxamide + (6S)-5,6,7,8-tetrahydrofolate. The enzyme catalyses IMP + H2O = 5-formamido-1-(5-phospho-D-ribosyl)imidazole-4-carboxamide. It participates in purine metabolism; IMP biosynthesis via de novo pathway; 5-formamido-1-(5-phospho-D-ribosyl)imidazole-4-carboxamide from 5-amino-1-(5-phospho-D-ribosyl)imidazole-4-carboxamide (10-formyl THF route): step 1/1. Its pathway is purine metabolism; IMP biosynthesis via de novo pathway; IMP from 5-formamido-1-(5-phospho-D-ribosyl)imidazole-4-carboxamide: step 1/1. This Streptococcus pneumoniae (strain JJA) protein is Bifunctional purine biosynthesis protein PurH.